The primary structure comprises 399 residues: Cell division protein FtsZ (399 aa).

GTP is bound by residues 18–22 (GGGVN), 105–107 (GTG), E136, R140, and D184. The tract at residues 311–399 (GFDGGQPPSK…EELDVPDFLK (89 aa)) is disordered. Residues 388-399 (AAEELDVPDFLK) are compositionally biased toward acidic residues.

The protein belongs to the FtsZ family. As to quaternary structure, homodimer. Polymerizes to form a dynamic ring structure in a strictly GTP-dependent manner. Interacts directly with several other division proteins.

It is found in the cytoplasm. Functionally, essential cell division protein that forms a contractile ring structure (Z ring) at the future cell division site. The regulation of the ring assembly controls the timing and the location of cell division. One of the functions of the FtsZ ring is to recruit other cell division proteins to the septum to produce a new cell wall between the dividing cells. Binds GTP and shows GTPase activity. This chain is Cell division protein FtsZ, found in Streptomyces coelicolor (strain ATCC BAA-471 / A3(2) / M145).